The sequence spans 421 residues: Ankyrin repeat and SOCS box protein 6 (421 aa).

ANK repeat units lie at residues 67 to 97, 102 to 131, 136 to 166, 170 to 205, 226 to 255, and 260 to 289; these read EGVS…NLNF, TYYT…DINR, HESS…DVNA, HGKT…DVKA, GGDK…DPSE, and ESLT…AYNC. Residues 360 to 415 form the SOCS box domain; the sequence is ALHFSLRQLESYPPPLKHLCRVAIRLYLQPWPVDVKVKALPLPDRLKWYLLSEHSG.

Belongs to the ankyrin SOCS box (ASB) family. As to quaternary structure, binds APS. Identified in a complex with ELOB and ELOC. Interacts with CUL5 and RNF7. Interacts with SQSTM1.

It is found in the cytoplasm. Its pathway is protein modification; protein ubiquitination. Its function is as follows. Probable substrate-recognition component of a SCF-like ECS (Elongin-Cullin-SOCS-box protein) E3 ubiquitin-protein ligase complex which mediates the ubiquitination and subsequent proteasomal degradation of target proteins. May play a role in the regulation of cell proliferation and autophagy by promoting the ubiquitination and degradation of SQSTM1. This Pongo abelii (Sumatran orangutan) protein is Ankyrin repeat and SOCS box protein 6 (ASB6).